We begin with the raw amino-acid sequence, 197 residues long: MRCLRKRQTIYAYSSSLTVLYLTQGKDWYCNCGSSTFKYSTFRPLHVQYGISKSMLTNLSRGVTWEVCWSCTCLYSSSSLGPVRKGGGFIEVFISSCRRSYSSWLKRGNSATMDAHVFGSSSSLLYCELLFVLCSRCPFMVCISQRRKSSLKLNTTLPMFALNLICLLRSILYSWKTFVRGILTFSFDVELVGLKFV.

Residues 150–172 (SLKLNTTLPMFALNLICLLRSIL) form a helical membrane-spanning segment.

Its subcellular location is the membrane. This is an uncharacterized protein from Saccharomyces cerevisiae (strain ATCC 204508 / S288c) (Baker's yeast).